The chain runs to 382 residues: D-galactonate dehydratase (382 aa).

Asp183 is a binding site for Mg(2+). The active-site Proton donor is His185. Glu209 and Glu235 together coordinate Mg(2+). Catalysis depends on His285, which acts as the Proton acceptor.

This sequence belongs to the mandelate racemase/muconate lactonizing enzyme family. GalD subfamily. Mg(2+) is required as a cofactor.

The enzyme catalyses D-galactonate = 2-dehydro-3-deoxy-D-galactonate + H2O. It functions in the pathway carbohydrate acid metabolism; D-galactonate degradation; D-glyceraldehyde 3-phosphate and pyruvate from D-galactonate: step 1/3. Functionally, catalyzes the dehydration of D-galactonate to 2-keto-3-deoxy-D-galactonate. This is D-galactonate dehydratase from Ralstonia pickettii (strain 12J).